The sequence spans 253 residues: Phosphoribosylaminoimidazole-succinocarboxamide synthase (253 aa).

The protein belongs to the SAICAR synthetase family.

It carries out the reaction 5-amino-1-(5-phospho-D-ribosyl)imidazole-4-carboxylate + L-aspartate + ATP = (2S)-2-[5-amino-1-(5-phospho-beta-D-ribosyl)imidazole-4-carboxamido]succinate + ADP + phosphate + 2 H(+). It participates in purine metabolism; IMP biosynthesis via de novo pathway; 5-amino-1-(5-phospho-D-ribosyl)imidazole-4-carboxamide from 5-amino-1-(5-phospho-D-ribosyl)imidazole-4-carboxylate: step 1/2. This Parvibaculum lavamentivorans (strain DS-1 / DSM 13023 / NCIMB 13966) protein is Phosphoribosylaminoimidazole-succinocarboxamide synthase.